A 61-amino-acid chain; its full sequence is Alpha-conotoxin-like Lp1.6a (61 aa).

A signal peptide spans 1-21; the sequence is MGMRMMFIIFLFVVLATTVVS. The propeptide occupies 22–44; sequence FTSGRASDGRNAPANNKVSDLIR. Gln-45 is subject to Pyrrolidone carboxylic acid. 2 disulfides stabilise this stretch: Cys-47–Cys-53 and Cys-48–Cys-60. Cys-60 is subject to Cysteine amide.

This sequence belongs to the conotoxin A superfamily. Expressed by the venom duct.

The protein localises to the secreted. Its function is as follows. Alpha-conotoxins act on postsynaptic membranes, they bind to the nicotinic acetylcholine receptors (nAChR) and thus inhibit them. The protein is Alpha-conotoxin-like Lp1.6a of Conus leopardus (Leopard cone).